Here is a 126-residue protein sequence, read N- to C-terminus: Large ribosomal subunit protein bL20 (126 aa).

This sequence belongs to the bacterial ribosomal protein bL20 family.

Functionally, binds directly to 23S ribosomal RNA and is necessary for the in vitro assembly process of the 50S ribosomal subunit. It is not involved in the protein synthesizing functions of that subunit. This Parafrankia sp. (strain EAN1pec) protein is Large ribosomal subunit protein bL20.